A 281-amino-acid polypeptide reads, in one-letter code: Splicing regulator RBM11 (281 aa).

The RRM domain occupies 10 to 87 (RTVFVGNLEA…RPINVQYRFG (78 aa)). Residues 184–281 (PSSYKWTHQQ…FRKSKKKKRY (98 aa)) form a disordered region. Composition is skewed to polar residues over residues 187–217 (YKWT…SSLN) and 229–242 (YKWT…SDLY). A Bipartite nuclear localization signal motif is present at residues 245 to 280 (NKRKRQKQTSDSDSSTDNNRGNECSQKFRKSKKKKR). Over residues 271–281 (KFRKSKKKKRY) the composition is skewed to basic residues.

As to quaternary structure, homodimer. As to expression, expressed in brain, hippocampus, prefrontal cortex, cerebellum, spinal cord, testis, mammary gland, spleen and kidney. Also expressed in fetal brain.

It localises to the nucleus. Its subcellular location is the nucleoplasm. The protein resides in the nucleus speckle. Functionally, tissue-specific splicing factor with potential implication in the regulation of alternative splicing during neuron and germ cell differentiation. Antagonizes SRSF1-mediated BCL-X splicing. May affect the choice of alternative 5' splice sites by binding to specific sequences in exons and antagonizing the SR protein SRSF1. The polypeptide is Splicing regulator RBM11 (Homo sapiens (Human)).